The primary structure comprises 387 residues: MSTGSTLNQRSGKPVKLRASCDFCALSKVKCDRGQPQCVRCIKSGIDCNYSESRRIGKAWHHCAPSAVRSTSATTQGTRRKQQTIAQHSPRRRIHRDTQALSAADDAMSPYDPSGYATPFSMFHTLPSPVPESTIRSQTHIESYPSLDGTMAPILCSPESADISLPDIPHVAQLRTNELEGESPSVLQYNPSWDRIMAEHSTAIGDAGDCITRAAAVLKSVRDPRTSCVRSRTPPRSHTQSLDATLDDGRTAMDTVKDILACPCAQEIRVALLLVLIIQQVLESYQALLTQQHDTPREESPLGINLSRYDTPMAIGRYLLDNELRSKIIVQVLSSELEKIGLILDILTRHAQSMAHQPDELILGTYIDSLQTTKKEVLESLEQGNDI.

The segment at residues 21-48 (CDFCALSKVKCDRGQPQCVRCIKSGIDC) is a DNA-binding region (zn(2)-C6 fungal-type). The span at 68–87 (VRSTSATTQGTRRKQQTIAQ) shows a compositional bias: polar residues. The tract at residues 68-94 (VRSTSATTQGTRRKQQTIAQHSPRRRI) is disordered.

It is found in the nucleus. Transcription factor; part of the gene cluster that mediates the biosynthesis of a methylated derivative of known natural products orthosporin and diaporthin. Positively regultaes the expression of the non-reducing polyketide synthase aoiG and the O-methyltransferase aoiO. In Aspergillus oryzae (strain ATCC 42149 / RIB 40) (Yellow koji mold), this protein is Zn(2)-C6 fungal-type trascription factor aoiH.